Reading from the N-terminus, the 384-residue chain is Succinyl-diaminopimelate desuccinylase (384 aa).

His73 contributes to the Zn(2+) binding site. Asp75 is a catalytic residue. Asp106 contacts Zn(2+). Glu140 serves as the catalytic Proton acceptor. Zn(2+)-binding residues include Glu141, Glu169, and His358.

The protein belongs to the peptidase M20A family. DapE subfamily. As to quaternary structure, homodimer. Zn(2+) is required as a cofactor. Requires Co(2+) as cofactor.

The enzyme catalyses N-succinyl-(2S,6S)-2,6-diaminopimelate + H2O = (2S,6S)-2,6-diaminopimelate + succinate. It participates in amino-acid biosynthesis; L-lysine biosynthesis via DAP pathway; LL-2,6-diaminopimelate from (S)-tetrahydrodipicolinate (succinylase route): step 3/3. Functionally, catalyzes the hydrolysis of N-succinyl-L,L-diaminopimelic acid (SDAP), forming succinate and LL-2,6-diaminopimelate (DAP), an intermediate involved in the bacterial biosynthesis of lysine and meso-diaminopimelic acid, an essential component of bacterial cell walls. The polypeptide is Succinyl-diaminopimelate desuccinylase (Pelagibacter ubique (strain HTCC1062)).